The following is a 208-amino-acid chain: Uracil phosphoribosyltransferase (208 aa).

5-phospho-alpha-D-ribose 1-diphosphate is bound by residues Arg78, Arg103, and 130 to 138 (DPMFATGGT). Residues Ile193 and 198–200 (GDA) contribute to the uracil site. Asp199 serves as a coordination point for 5-phospho-alpha-D-ribose 1-diphosphate.

It belongs to the UPRTase family. Mg(2+) serves as cofactor.

The enzyme catalyses UMP + diphosphate = 5-phospho-alpha-D-ribose 1-diphosphate + uracil. It participates in pyrimidine metabolism; UMP biosynthesis via salvage pathway; UMP from uracil: step 1/1. Its activity is regulated as follows. Allosterically activated by GTP. Catalyzes the conversion of uracil and 5-phospho-alpha-D-ribose 1-diphosphate (PRPP) to UMP and diphosphate. This is Uracil phosphoribosyltransferase from Campylobacter jejuni subsp. jejuni serotype O:6 (strain 81116 / NCTC 11828).